The following is an 82-amino-acid chain: ATP synthase subunit c, chloroplastic (82 aa).

The next 2 helical transmembrane spans lie at 4–24 (IISA…AIGP) and 57–77 (LAFM…LLFA).

The protein belongs to the ATPase C chain family. As to quaternary structure, F-type ATPases have 2 components, F(1) - the catalytic core - and F(0) - the membrane proton channel. F(1) has five subunits: alpha(3), beta(3), gamma(1), delta(1), epsilon(1). F(0) has four main subunits: a(1), b(1), b'(1) and c(10-14). The alpha and beta chains form an alternating ring which encloses part of the gamma chain. F(1) is attached to F(0) by a central stalk formed by the gamma and epsilon chains, while a peripheral stalk is formed by the delta, b and b' chains.

It is found in the plastid. The protein resides in the chloroplast thylakoid membrane. Functionally, f(1)F(0) ATP synthase produces ATP from ADP in the presence of a proton or sodium gradient. F-type ATPases consist of two structural domains, F(1) containing the extramembraneous catalytic core and F(0) containing the membrane proton channel, linked together by a central stalk and a peripheral stalk. During catalysis, ATP synthesis in the catalytic domain of F(1) is coupled via a rotary mechanism of the central stalk subunits to proton translocation. Key component of the F(0) channel; it plays a direct role in translocation across the membrane. A homomeric c-ring of between 10-14 subunits forms the central stalk rotor element with the F(1) delta and epsilon subunits. The chain is ATP synthase subunit c, chloroplastic from Antithamnion sp. (Red alga).